A 906-amino-acid polypeptide reads, in one-letter code: Protein translocase subunit SecA (906 aa).

ATP is bound by residues Gln87, 105–109, and Asp512; that span reads GEGKT. A disordered region spans residues 879-906; sequence REGEKIGRNDPCPCGSGQKYKQCHGKLS. Positions 890, 892, 901, and 902 each coordinate Zn(2+).

It belongs to the SecA family. Monomer and homodimer. Part of the essential Sec protein translocation apparatus which comprises SecA, SecYEG and auxiliary proteins SecDF-YajC and YidC. Requires Zn(2+) as cofactor.

The protein localises to the cell inner membrane. It is found in the cytoplasm. The catalysed reaction is ATP + H2O + cellular proteinSide 1 = ADP + phosphate + cellular proteinSide 2.. Part of the Sec protein translocase complex. Interacts with the SecYEG preprotein conducting channel. Has a central role in coupling the hydrolysis of ATP to the transfer of proteins into and across the cell membrane, serving both as a receptor for the preprotein-SecB complex and as an ATP-driven molecular motor driving the stepwise translocation of polypeptide chains across the membrane. This Shewanella frigidimarina (strain NCIMB 400) protein is Protein translocase subunit SecA.